The primary structure comprises 149 residues: Limonene-1,2-epoxide hydrolase (149 aa).

Asp-101 serves as the catalytic Proton donor. Asp-132 acts as the Proton acceptor in catalysis.

This sequence belongs to the limonene-1,2-epoxide hydrolase family. As to quaternary structure, monomer.

The catalysed reaction is limonene 1,2-epoxide + H2O = limonene-1,2-diol. The protein operates within terpene metabolism; (4R)-limonene degradation; (1S,4R)-1-hydroxylimonen-2-one from (4R)-limonene: step 2/3. In terms of biological role, catalyzes the conversion of limonene-1,2-epoxide to limonene-1,2-diol. Can use both the (-) and (+) isomers of limonene-1,2-epoxide as substrates and also has some activity with 1-methylcyclohexene oxide, cyclohexene oxide and indene oxide as substrates. The polypeptide is Limonene-1,2-epoxide hydrolase (limA) (Rhodococcus erythropolis (Arthrobacter picolinophilus)).